Here is a 360-residue protein sequence, read N- to C-terminus: MKFGNFLLTYQPPQFSQTEVMKRLVKLGRISEECGFDTVWLLEHHFTEFGLLGNPYVAAAYLLGATKKLNVGTAAIVLPTAHPVRQLEDVNLLDQMSKGRFRFGICRGLYNKDFRVFGTDMNNSRALAECWYGLIKNGMTEGYMEADNEHIKFHKVKVNPAAYSRGGAPVYVVAESASTTEWAAQFGLPMILSWIINTNEKKAQLELYNEVAQEYGHDIHNIDHCLSYITSVDHDSIKAKEICRKFLGHWYDSYVNATTIFDDSDQTRGYDFNKGQWRDFVLKGHKDTNRRIDYSYEINPVGTPQECIDIIQKDIDATGISNICCGFEANGTVDEIIASMKLFQSDVMPFLKEKQRSLLY.

Belongs to the bacterial luciferase oxidoreductase family. In terms of assembly, heterodimer of an alpha and a beta chain.

The enzyme catalyses a long-chain fatty aldehyde + FMNH2 + O2 = a long-chain fatty acid + hnu + FMN + H2O + 2 H(+). Functionally, light-emitting reaction in luminous bacteria. This Photorhabdus luminescens (Xenorhabdus luminescens) protein is Alkanal monooxygenase alpha chain (luxA).